We begin with the raw amino-acid sequence, 1270 residues long: Nuclear exosome regulator NRDE2 (1270 aa).

2 disordered regions span residues 1–22 (MFRA…ENPD) and 119–209 (SVKS…HTLM). The segment covering 119 to 135 (SVKSLNGCQDPPETSQQ) has biased composition (polar residues). Basic residues predominate over residues 164 to 184 (QRSRSREKKRRKKERRRKRSS). The segment covering 192 to 204 (RSRDRSSRARDTS) has biased composition (basic and acidic residues).

It belongs to the NRDE2 family. Interacts with nrde-3.

Its subcellular location is the nucleus. It localises to the nucleus speckle. It is found in the nucleolus. Its function is as follows. Protein of the nuclear speckles that regulates RNA exosomal degradation. Involved in short interfering RNAs-mediated silencing in nuclei. Functions with nrde-3 in the nuclear RNA-mediated gene silencing (RNAi) pathway to regulate gene expression via inhibition of RNA polymerases I and II during the elongation phase of transcription. Required for exogenous RNAi-induced H3K27 methylation. In Caenorhabditis elegans, this protein is Nuclear exosome regulator NRDE2 (nrde-2).